The primary structure comprises 541 residues: MLQLARFYSLARTKAIHSHGAPFRPEYALKCGLEIHTQLNTKNKLFSQSTNSATSLVDAPNHHTSYYDIALPGTQPVLNLEAILFAMKLSLALGSQVNSISQFDRKHYFYGDQPQGYQLTQHYRPFARGGKINLSKELDDIDESAKEIGILQLQIEQDTGKSHYTETDKDVITLVDLNRSNVPLIELVTKPDFSDIKQVRAFIKKYQNLVRHLHISSGDLETGAMRVDVNLSINEYARVELKNLPNTSSIINAIKYEYQRQVELISVGDTSSLMEPETRGWTGSSTVKLRSKETTIDYRYMPDPELPYINLAQDVISGVRGLMPQLPDDIMRMLMKKPYQLSLKDAKILTYNSNQNDMYNHEALRSYYLDTFREFSKLAGERSNAKLPTNWIIHEFLGDLNKLQIPLARAKEILPPPVFAQFLKLLHEEVISATSGKMLLFHILENFKQSNCQDLSIPDFSKLIEKFELHAINQVDPQELMDLCNDVIAQHTDDTFIRNLVTGKKKSSLKFLIGQGMRRSQGRIKANEFEKKFKEILNIQW.

This sequence belongs to the GatB/GatE family. GatB subfamily. In terms of assembly, subunit of the heterotrimeric GatFAB amidotransferase (AdT) complex, composed of A, B and F subunits.

The protein resides in the mitochondrion. The enzyme catalyses L-glutamyl-tRNA(Gln) + L-glutamine + ATP + H2O = L-glutaminyl-tRNA(Gln) + L-glutamate + ADP + phosphate + H(+). In terms of biological role, allows the formation of correctly charged Gln-tRNA(Gln) through the transamidation of misacylated Glu-tRNA(Gln) in the mitochondria. The reaction takes place in the presence of glutamine and ATP through an activated gamma-phospho-Glu-tRNA(Gln). In Saccharomyces cerevisiae (strain RM11-1a) (Baker's yeast), this protein is Glutamyl-tRNA(Gln) amidotransferase subunit B, mitochondrial.